Consider the following 248-residue polypeptide: ATP synthase subunit a (248 aa).

The next 6 helical transmembrane spans lie at 34–54 (TNVT…LVAG), 91–111 (YFPY…LGLI), 121–141 (IAVT…IGFV), 147–167 (FLSL…LAVI), 197–217 (FAGF…VMAI), and 220–240 (LEVL…CVYL).

This sequence belongs to the ATPase A chain family. F-type ATPases have 2 components, CF(1) - the catalytic core - and CF(0) - the membrane proton channel. CF(1) has five subunits: alpha(3), beta(3), gamma(1), delta(1), epsilon(1). CF(0) has four main subunits: a, b, b' and c.

Its subcellular location is the cell inner membrane. In terms of biological role, key component of the proton channel; it plays a direct role in the translocation of protons across the membrane. In Dinoroseobacter shibae (strain DSM 16493 / NCIMB 14021 / DFL 12), this protein is ATP synthase subunit a.